The sequence spans 88 residues: Small ribosomal subunit protein bS16 (88 aa).

This sequence belongs to the bacterial ribosomal protein bS16 family.

The chain is Small ribosomal subunit protein bS16 from Buchnera aphidicola subsp. Cinara cedri (strain Cc).